Here is a 126-residue protein sequence, read N- to C-terminus: uncharacterized protein (126 aa).

The HTH hxlR-type domain maps to 20-118 (CPSREVLKHV…WIELNLPEVL (99 aa)).

This is an uncharacterized protein from Escherichia coli (strain K12).